Here is a 283-residue protein sequence, read N- to C-terminus: Bis(5'-nucleosyl)-tetraphosphatase, symmetrical (283 aa).

It belongs to the Ap4A hydrolase family.

The enzyme catalyses P(1),P(4)-bis(5'-adenosyl) tetraphosphate + H2O = 2 ADP + 2 H(+). Hydrolyzes diadenosine 5',5'''-P1,P4-tetraphosphate to yield ADP. The sequence is that of Bis(5'-nucleosyl)-tetraphosphatase, symmetrical from Pseudomonas fluorescens (strain SBW25).